We begin with the raw amino-acid sequence, 571 residues long: Leucine aminopeptidase A2, chloroplastic (571 aa).

The N-terminal 42 residues, 1–42 (MATLRVSSLFASSSSSLHSNPSVFTKYQSSPKWAFSFPVTPL), are a transit peptide targeting the chloroplast. Positions 342 and 347 each coordinate Mg(2+). The active site involves Lys-354. The Mg(2+) site is built by Asp-367, Asp-427, and Glu-429. Arg-431 is a catalytic residue.

It belongs to the peptidase M17 family. As to quaternary structure, homohexamer (dimer of homotrimers). Requires Mg(2+) as cofactor. As to expression, expressed during floral development. Expressed in healthy and senescent leaves, cotyledons (emergence from seed coats), pistils, sepals, petals, stamens, and floral buds (at protein level).

The protein resides in the plastid. The protein localises to the chloroplast. It catalyses the reaction Release of an N-terminal amino acid, Xaa-|-Yaa-, in which Xaa is preferably Leu, but may be other amino acids including Pro although not Arg or Lys, and Yaa may be Pro. Amino acid amides and methyl esters are also readily hydrolyzed, but rates on arylamides are exceedingly low.. The enzyme catalyses Release of N-terminal proline from a peptide.. In terms of biological role, catalyzes the removal of unsubstituted N-terminal amino acids from various peptides. When associated as homohexamer, catalyzes the proteolyzes of Xaa-Leu dipeptides. Possesses leucine aminopeptidase activity against the model substrate leucine-amido methyl coumarin. Presumably involved in the processing and regular turnover of intracellular proteins. Regulates wound signaling and has a role in insect defense. Functions as a molecular chaperone to protect proteins from heat-induced damage. This chain is Leucine aminopeptidase A2, chloroplastic, found in Solanum lycopersicum (Tomato).